We begin with the raw amino-acid sequence, 424 residues long: Histidinol dehydrogenase (424 aa).

3 residues coordinate NAD(+): Tyr-121, Gln-183, and Asn-206. Substrate-binding residues include Ser-229, Gln-251, and His-254. Zn(2+)-binding residues include Gln-251 and His-254. Residues Glu-319 and His-320 each act as proton acceptor in the active site. Positions 320, 353, 407, and 412 each coordinate substrate. Position 353 (Asp-353) interacts with Zn(2+). Residue His-412 coordinates Zn(2+).

Belongs to the histidinol dehydrogenase family. Zn(2+) serves as cofactor.

It catalyses the reaction L-histidinol + 2 NAD(+) + H2O = L-histidine + 2 NADH + 3 H(+). The protein operates within amino-acid biosynthesis; L-histidine biosynthesis; L-histidine from 5-phospho-alpha-D-ribose 1-diphosphate: step 9/9. Its function is as follows. Catalyzes the sequential NAD-dependent oxidations of L-histidinol to L-histidinaldehyde and then to L-histidine. This chain is Histidinol dehydrogenase, found in Halalkalibacterium halodurans (strain ATCC BAA-125 / DSM 18197 / FERM 7344 / JCM 9153 / C-125) (Bacillus halodurans).